A 450-amino-acid chain; its full sequence is Methionine aminopeptidase 2-2 (450 aa).

Basic and acidic residues-rich tracts occupy residues 1-10 and 30-39; these read MGAKISEDHP and RGAHLSRDGD. A disordered region spans residues 1–100; the sequence is MGAKISEDHP…PPRVPLSELF (100 aa). Residues 47 to 56 show a composition bias toward acidic residues; it reads GDDDDDDDEG. A compositionally biased stretch (basic residues) spans 69 to 86; sequence KKKKKKRKPKKKKAKKAT. Histidine 211 is a substrate binding site. A divalent metal cation is bound by residues aspartate 232, aspartate 243, and histidine 302. Histidine 310 contacts substrate. A divalent metal cation is bound by residues glutamate 335 and glutamate 431.

The protein belongs to the peptidase M24A family. Methionine aminopeptidase eukaryotic type 2 subfamily. Co(2+) serves as cofactor. The cofactor is Zn(2+). Mn(2+) is required as a cofactor. Requires Fe(2+) as cofactor.

It is found in the cytoplasm. The catalysed reaction is Release of N-terminal amino acids, preferentially methionine, from peptides and arylamides.. Cotranslationally removes the N-terminal methionine from nascent proteins. The N-terminal methionine is often cleaved when the second residue in the primary sequence is small and uncharged (Met-Ala-, Cys, Gly, Pro, Ser, Thr, or Val). This is Methionine aminopeptidase 2-2 from Fusarium vanettenii (strain ATCC MYA-4622 / CBS 123669 / FGSC 9596 / NRRL 45880 / 77-13-4) (Fusarium solani subsp. pisi).